Consider the following 156-residue polypeptide: UPF0232 protein BL0636 (156 aa).

It belongs to the UPF0232 family.

The polypeptide is UPF0232 protein BL0636 (Bifidobacterium longum (strain NCC 2705)).